Reading from the N-terminus, the 301-residue chain is Putative glycosyltransferase MJ1113 (301 aa).

Transmembrane regions (helical) follow at residues 2–22 (GHYF…SAVL), 62–82 (FIPF…IIGI), 95–115 (LILL…NSYV), 117–137 (LIEI…TNML), 140–160 (FNGL…LVLF), 164–184 (YTTG…LLIF), 191–211 (VFPG…LAVV), and 280–300 (VTVL…ISLI).

Belongs to the glycosyltransferase 4 family.

The protein localises to the cell membrane. The protein is Putative glycosyltransferase MJ1113 of Methanocaldococcus jannaschii (strain ATCC 43067 / DSM 2661 / JAL-1 / JCM 10045 / NBRC 100440) (Methanococcus jannaschii).